Consider the following 95-residue polypeptide: Protein TusB (95 aa).

The protein belongs to the DsrH/TusB family. As to quaternary structure, heterohexamer, formed by a dimer of trimers. The hexameric TusBCD complex contains 2 copies each of TusB, TusC and TusD. The TusBCD complex interacts with TusE.

It is found in the cytoplasm. Part of a sulfur-relay system required for 2-thiolation of 5-methylaminomethyl-2-thiouridine (mnm(5)s(2)U) at tRNA wobble positions. This is Protein TusB from Escherichia coli (strain SMS-3-5 / SECEC).